Reading from the N-terminus, the 323-residue chain is Mitochondrial glutamate carrier 1 (323 aa).

Solcar repeat units follow at residues 6–93 (ISLP…FRHQ), 101–214 (LTLP…LNQL), and 223–312 (SPFY…GIAE). 6 helical membrane-spanning segments follow: residues 12–32 (LING…IDLA), 62–82 (YFGM…EKAI), 107–127 (MLAG…MEML), 189–209 (GLGA…PLFA), 223–243 (SPFY…AVAV), and 292–312 (ALVI…GIAE).

The protein belongs to the mitochondrial carrier (TC 2.A.29) family. As to expression, detected in insulin-secreting beta-cells and pancreatic islets (at the protein level).

It localises to the mitochondrion inner membrane. It carries out the reaction L-glutamate(in) + H(+)(in) = L-glutamate(out) + H(+)(out). Functionally, mitochondrial glutamate/H(+) symporter. Responsible for the transport of glutamate from the cytosol into the mitochondrial matrix with the concomitant import of a proton. Plays a role in the control of glucose-stimulated insulin secretion. The sequence is that of Mitochondrial glutamate carrier 1 from Rattus norvegicus (Rat).